A 90-amino-acid polypeptide reads, in one-letter code: Nodulation protein NolS (90 aa).

Functionally, involved in nodulation of a particular host, M.lupulina. In Sinorhizobium meliloti (strain Sm2011 / Rm2011 / 2011), this protein is Nodulation protein NolS (nolS).